A 670-amino-acid polypeptide reads, in one-letter code: uncharacterized protein (670 aa).

A run of 10 helical transmembrane segments spans residues 23 to 42 (YALRNTIAMCLALTVAYYLN), 47 to 69 (YWAMTSAAVVSFPTVGGVISKSL), 76 to 98 (LLGAIAALLLAGHTLNEPWFFLL), 118 to 140 (VAYAFQLAGYTAAIIAFPMVNIT), 153 to 170 (VCEVIVGILCGGMMMMIL), 381 to 403 (QWDAGANALTLAAISCVLYSAVA), 410 to 432 (SLLMRTLVLLSLFSFVVKFGLMV), 437 to 454 (LWQFLLFLFPLLATMQLL), 461 to 483 (FAALWGQLIVFMGSFIAVTNPPV), and 493 to 510 (NLAKIVGVALAWLAFAIL).

The protein belongs to the aromatic acid exporter ArAE (TC 2.A.85) family.

It is found in the cell membrane. This is an uncharacterized protein from Escherichia coli O157:H7.